The sequence spans 513 residues: MHLNPSEISELIKSRIEGLEATAEVRTQGTVVSVTDGIVRIHGLSDVMQGEMLEFPGNTFGLALNLERDSVGAVVLGEYEHITEGDTVKCTGRILEVPVGEELIGRVVNALGQPIDGKGPITTKHSEPIEKIAPGVVWRQSVNQPVQTGLKAIDAMVPIGRGQRELIIGDRQTGKTAVAVDAIINQKGENMICIYVAIGQKASSISNVVRKLEEHGAMEYTIVVAATASESAAMQFIAPYSGCTMGEYFRDTGRDALIVYDDLTKQAWAYRQISLLLRRPPGREAYPGDVFYLHSRLLERAARVSAAYVEKETNGAVKGKTGSLTALPVIETQAGDVTAFVPTNVISITDGQIFLESDLFNAGIRPAINAGISVSRVGGAAQTKVIKKLGGGVRLALAQYRELAAFAQFASDLDEATRKQLERGKMVTELMKQPQYSTLSVSEMALTLFAVNKGYLDDVEVSRALAFESALRGFIRSKYGAILDKIETTKDLDAETEKELDAAIQDFKKNGTY.

Residue 169–176 participates in ATP binding; it reads GDRQTGKT.

The protein belongs to the ATPase alpha/beta chains family. As to quaternary structure, F-type ATPases have 2 components, CF(1) - the catalytic core - and CF(0) - the membrane proton channel. CF(1) has five subunits: alpha(3), beta(3), gamma(1), delta(1), epsilon(1). CF(0) has three main subunits: a(1), b(2) and c(9-12). The alpha and beta chains form an alternating ring which encloses part of the gamma chain. CF(1) is attached to CF(0) by a central stalk formed by the gamma and epsilon chains, while a peripheral stalk is formed by the delta and b chains.

The protein resides in the cell inner membrane. The enzyme catalyses ATP + H2O + 4 H(+)(in) = ADP + phosphate + 5 H(+)(out). Functionally, produces ATP from ADP in the presence of a proton gradient across the membrane. The alpha chain is a regulatory subunit. The protein is ATP synthase subunit alpha 1 of Nitrosospira multiformis (strain ATCC 25196 / NCIMB 11849 / C 71).